The following is a 129-amino-acid chain: Glycine cleavage system H protein (129 aa).

In terms of domain architecture, Lipoyl-binding spans 23-104 (TATIGITQHA…AYAAWLFRLK (82 aa)). Lysine 64 carries the post-translational modification N6-lipoyllysine.

The protein belongs to the GcvH family. As to quaternary structure, the glycine cleavage system is composed of four proteins: P, T, L and H. It depends on (R)-lipoate as a cofactor.

Functionally, the glycine cleavage system catalyzes the degradation of glycine. The H protein shuttles the methylamine group of glycine from the P protein to the T protein. The protein is Glycine cleavage system H protein of Nitrosospira multiformis (strain ATCC 25196 / NCIMB 11849 / C 71).